Consider the following 883-residue polypeptide: Translation initiation factor IF-2 (883 aa).

Disordered regions lie at residues 1–96 (MVDT…RSGM) and 132–259 (QRRA…RGRL). The span at 57–66 (PAEPAAAAPE) shows a compositional bias: low complexity. The span at 72 to 87 (TPAPPAVSPRQQPRPS) shows a compositional bias: pro residues. The span at 132–188 (QRRAAQELVDKAEREAAEVRRKAEEERHRHEEETKRKAETEAKKRFGEAEPAKKPAD) shows a compositional bias: basic and acidic residues. The segment covering 191-217 (PASTSTTTTAPRAPVTTTTRPPAVAAE) has biased composition (low complexity). In terms of domain architecture, tr-type G spans 380–551 (PRSPVVTVMG…ALQAELLDLK (172 aa)). A G1 region spans residues 389–396 (GHVDHGKT). GTP is bound at residue 389–396 (GHVDHGKT). The segment at 414 to 418 (GITQH) is G2. The G3 stretch occupies residues 437 to 440 (DTPG). Residues 437–441 (DTPGH) and 491–494 (NKID) contribute to the GTP site. A G4 region spans residues 491–494 (NKID). The segment at 527 to 529 (SAK) is G5.

Belongs to the TRAFAC class translation factor GTPase superfamily. Classic translation factor GTPase family. IF-2 subfamily.

Its subcellular location is the cytoplasm. Functionally, one of the essential components for the initiation of protein synthesis. Protects formylmethionyl-tRNA from spontaneous hydrolysis and promotes its binding to the 30S ribosomal subunits. Also involved in the hydrolysis of GTP during the formation of the 70S ribosomal complex. This chain is Translation initiation factor IF-2, found in Rhodopseudomonas palustris (strain BisB5).